A 609-amino-acid polypeptide reads, in one-letter code: Kelch domain-containing protein 10 homolog (609 aa).

The disordered stretch occupies residues 103-146; that stretch reads ASDLDEEEEEEDDDVDVDVDYGDTDSESEFEEMYSDEWTSSSDE. Acidic residues predominate over residues 104-137; sequence SDLDEEEEEEDDDVDVDVDYGDTDSESEFEEMYS. 6 Kelch repeats span residues 214 to 277, 279 to 334, 335 to 381, 389 to 437, 458 to 508, and 510 to 554; these read HLYS…IHNN, LISH…IHKH, FLYT…RYRH, HIFV…GNRG, EAFI…HSDN, and CMYV…YNDN. The interval 576–609 is disordered; sequence LPPQRRRRLDTSQPDPSMLISLYSNPKRARSSTQ.

As to quaternary structure, interacts with Elongin-C; may be the substrate recognition component of an E3 ubiquitin ligase complex.

Activates the Pk92B/DASK1-MAPK signaling cascade. The chain is Kelch domain-containing protein 10 homolog (slim) from Drosophila melanogaster (Fruit fly).